A 1391-amino-acid chain; its full sequence is DNA-directed RNA polymerase subunit beta' (1391 aa).

Residues Cys70, Cys72, Cys85, and Cys88 each coordinate Zn(2+). Residues Asp461, Asp463, and Asp465 each coordinate Mg(2+). The Zn(2+) site is built by Cys809, Cys882, Cys889, and Cys892.

Belongs to the RNA polymerase beta' chain family. As to quaternary structure, the RNAP catalytic core consists of 2 alpha, 1 beta, 1 beta' and 1 omega subunit. When a sigma factor is associated with the core the holoenzyme is formed, which can initiate transcription. Mg(2+) serves as cofactor. Requires Zn(2+) as cofactor.

The enzyme catalyses RNA(n) + a ribonucleoside 5'-triphosphate = RNA(n+1) + diphosphate. Functionally, DNA-dependent RNA polymerase catalyzes the transcription of DNA into RNA using the four ribonucleoside triphosphates as substrates. This chain is DNA-directed RNA polymerase subunit beta', found in Zymomonas mobilis subsp. mobilis (strain ATCC 31821 / ZM4 / CP4).